Reading from the N-terminus, the 352-residue chain is Endophilin-A1 (352 aa).

A membrane-binding amphipathic helix region spans residues M1–V21. The disordered stretch occupies residues M1 to T27. The tract at residues M1–S125 is binds and tubulates liposomes. The 232-residue stretch at S18–S249 folds into the BAR domain. The tract at residues P60–P87 is required for dimerization upon membrane association. A coiled-coil region spans residues E181–S248. S262 bears the Phosphoserine mark. The interval E264–Q289 is disordered. A compositionally biased stretch (polar residues) spans G268 to G281. The 60-residue stretch at M290–A349 folds into the SH3 domain. Y299 carries the post-translational modification Phosphotyrosine.

The protein belongs to the endophilin family. Monomer; in cytoplasm. Homodimer; when associated with membranes. Interacts with SYNJ1. Interacts with DNM1. Interacts with MAP4K3; the interaction appears to regulate MAP4K3-mediated JNK activation. Interacts with OPHN1. Interacts with PDCD6IP. Interacts with BIN2. Interacts with ATXN2. Interacts with ADAM9 and ADAM15 cytoplasmic tails. Interacts with TMEM108. Interacts with ADGRB2.

Its subcellular location is the cytoplasm. The protein localises to the membrane. It is found in the early endosome. It localises to the presynapse. Its function is as follows. Implicated in synaptic vesicle endocytosis. May recruit other proteins to membranes with high curvature. Required for BDNF-dependent dendrite outgrowth. Cooperates with SH3GL2 to mediate BDNF-NTRK2 early endocytic trafficking and signaling from early endosomes. This is Endophilin-A1 (Sh3gl2) from Mus musculus (Mouse).